A 1016-amino-acid polypeptide reads, in one-letter code: S-layer protein A (1016 aa).

An N-terminal signal peptide occupies residues 1–30 (MDLSTKKVISAGLVFIYALSLAMLVPMFLA).

It belongs to the Sulfolobales SlaA family. The mushroom-shaped unit cells of the Sulfolobales' S-layers may consist of three SlaB subunits and six SlaA subunits.

The protein resides in the secreted. It is found in the cell wall. It localises to the S-layer. Functionally, S-layer large protein. May form the highly ordered outer sheath. The chain is S-layer protein A from Acidianus ambivalens (Desulfurolobus ambivalens).